We begin with the raw amino-acid sequence, 672 residues long: Negative growth regulatory protein NGR1 (672 aa).

Residue methionine 1 is modified to N-acetylmethionine. Composition is skewed to polar residues over residues 1–13 and 23–32; these read MMSNVANASQRQE and SSTVETSTEP. Disordered stretches follow at residues 1–40 and 77–102; these read MMSNVANASQRQENPYIIPLPPSSTVETSTEPPRTLWMGD and SSTSSSNNNTSEENAENQQSASNSTD. Methionine 2 is subject to N-acetylserine. RRM domains lie at 36-159, 192-271, and 360-432; these read LWMG…YSPT, FSLF…YATP, and TTVF…WGRP. Low complexity predominate over residues 77–96; that stretch reads SSTSSSNNNTSEENAENQQS. Serine 524 bears the Phosphoserine mark. Positions 640–672 are disordered; it reads LNIAPNSNNSKSSIMNKHPNRNNVPPIHPSLLH. Positions 645–656 are enriched in low complexity; it reads NSNNSKSSIMNK.

May be an RNA-binding protein involved in control of an RNA processing pathway that influences the regulation of cell growth in early log phase. Can bind to RNA and single-stranded DNA but not double-stranded DNA. The sequence is that of Negative growth regulatory protein NGR1 (NGR1) from Saccharomyces cerevisiae (strain ATCC 204508 / S288c) (Baker's yeast).